A 295-amino-acid chain; its full sequence is Acetaldehyde dehydrogenase (295 aa).

NAD(+) is bound at residue 11-14; the sequence is SGNI. Residue cysteine 127 is the Acyl-thioester intermediate of the active site. Residues 158-166 and asparagine 270 contribute to the NAD(+) site; that span reads SAGPGTRAN.

The protein belongs to the acetaldehyde dehydrogenase family.

It carries out the reaction acetaldehyde + NAD(+) + CoA = acetyl-CoA + NADH + H(+). This is Acetaldehyde dehydrogenase (nbaJ) from Geobacillus thermodenitrificans (strain NG80-2).